Consider the following 49-residue polypeptide: MGVKKVALACTVCGSRNYYVAENKNRTERLELNKYCKHCGQYAQHKETR.

Belongs to the bacterial ribosomal protein bL33 family.

This is Large ribosomal subunit protein bL33B from Latilactobacillus sakei subsp. sakei (strain 23K) (Lactobacillus sakei subsp. sakei).